The chain runs to 143 residues: Methylglyoxal synthase (143 aa).

The MGS-like domain occupies 1–143; sequence MTVKKIALVA…DYEAYRNRII (143 aa). Substrate is bound by residues H11, K15, 37 to 40, and 57 to 58; these read TGST and SG. D63 acts as the Proton donor/acceptor in catalysis. H90 provides a ligand contact to substrate.

Belongs to the methylglyoxal synthase family.

The enzyme catalyses dihydroxyacetone phosphate = methylglyoxal + phosphate. Catalyzes the formation of methylglyoxal from dihydroxyacetone phosphate. This Coxiella burnetii (strain Dugway 5J108-111) protein is Methylglyoxal synthase.